The sequence spans 346 residues: Rhomboid protein 1, mitochondrial (346 aa).

A mitochondrion-targeting transit peptide spans 1–73; sequence MSGVSSVMLG…RFFSQTSILK (73 aa). The next 6 membrane-spanning stretches (helical) occupy residues 109 to 129, 145 to 165, 203 to 223, 246 to 266, 275 to 295, and 308 to 328; these read SMTI…PYLF, LVYA…LPKC, MLAL…SNFF, LAIV…LGCF, ILLF…ASVA, and FDYA…WYIS. Catalysis depends on serine 256, which acts as the Nucleophile. The active site involves histidine 313.

Belongs to the peptidase S54 family.

The protein localises to the mitochondrion inner membrane. It carries out the reaction Cleaves type-1 transmembrane domains using a catalytic dyad composed of serine and histidine that are contributed by different transmembrane domains.. Functionally, mitochondrial rhomboid serine protease processing the mitochondrial membrane fusion regulator MGM1, and the cytochrome c peroxidase (CCP1). Required for TIM11 stability, ATP synthase complex assembly, mitochondrial morphology, cytochrome c (CYC1) storage and mitochondrial genome maintenance. This Saccharomyces cerevisiae (strain ATCC 204508 / S288c) (Baker's yeast) protein is Rhomboid protein 1, mitochondrial (PCP1).